Here is a 262-residue protein sequence, read N- to C-terminus: MYHVNRIYPKKELSQCFISSSHITDKIVNYAGNISDYSIIEIGPGLGTMTYSILNKNPKRLISIEKDSRLMPIHKKIVDEFNGKYEFILSDALNIDLRTIIEPPVKIIANLPYHIATPLLMKWINYIDFFTSFTLMFQKEVADRIVAQPNNKNYSILSVLIQLLSNVYKMEDFGPEIFSPQPKVMSSVINIIVLPKPRFNVNHNKLSQVLKVTFGERRKMIRSTLKKLINNTDEILQSLNINNNLRPENLSIEQFCKIANSI.

Residues Ile-18, Gly-43, Glu-65, Asp-91, and Asn-110 each coordinate S-adenosyl-L-methionine.

It belongs to the class I-like SAM-binding methyltransferase superfamily. rRNA adenine N(6)-methyltransferase family. RsmA subfamily.

Its subcellular location is the cytoplasm. It carries out the reaction adenosine(1518)/adenosine(1519) in 16S rRNA + 4 S-adenosyl-L-methionine = N(6)-dimethyladenosine(1518)/N(6)-dimethyladenosine(1519) in 16S rRNA + 4 S-adenosyl-L-homocysteine + 4 H(+). Its function is as follows. Specifically dimethylates two adjacent adenosines (A1518 and A1519) in the loop of a conserved hairpin near the 3'-end of 16S rRNA in the 30S particle. May play a critical role in biogenesis of 30S subunits. This chain is Ribosomal RNA small subunit methyltransferase A, found in Ehrlichia canis (strain Jake).